The primary structure comprises 77 residues: U8-hexatoxin-Mg1a (77 aa).

Positions 1-22 (MKVFSFTIGLVVIISLFAFALA) are cleaved as a signal peptide. A propeptide spanning residues 23–43 (YDEETDLMKKLVEMERAIEQR) is cleaved from the precursor. 3 cysteine pairs are disulfide-bonded: Cys46–Cys60, Cys53–Cys65, and Cys59–Cys76.

In terms of tissue distribution, expressed by the venom gland.

It is found in the secreted. Its function is as follows. Intrathorax injection into crickets causes paralysis prolonged for more than 60 minutes, followed by recovery. The chain is U8-hexatoxin-Mg1a from Macrothele gigas (Japanese funnel web spider).